A 503-amino-acid chain; its full sequence is Nondiscriminating glutamyl-tRNA synthetase EARS2, mitochondrial (503 aa).

The transit peptide at 1-22 directs the protein to the mitochondrion; it reads MKILRGVSRQMCTSRPEVRVRF. An L-glutamate-binding site is contributed by 21–23; it reads RFA. The 'HIGH' region motif lies at 26–34; it reads PTGFLHLGG. Histidine 31 serves as a coordination point for ATP. Residues glutamate 57, 209–213, and arginine 227 contribute to the L-glutamate site; that span reads YHLAS. ATP-binding positions include glutamate 230 and 265-269; that span reads KLSKR. Positions 265–269 match the 'KMSKS' region motif; it reads KLSKR.

It belongs to the class-I aminoacyl-tRNA synthetase family. Glutamate--tRNA ligase type 1 subfamily.

The protein resides in the mitochondrion matrix. It catalyses the reaction tRNA(Glx) + L-glutamate + ATP = L-glutamyl-tRNA(Glx) + AMP + diphosphate. It carries out the reaction tRNA(Glu) + L-glutamate + ATP = L-glutamyl-tRNA(Glu) + AMP + diphosphate. The catalysed reaction is tRNA(Gln) + L-glutamate + ATP = L-glutamyl-tRNA(Gln) + AMP + diphosphate. Its function is as follows. Non-discriminating glutamyl-tRNA synthetase that catalyzes aminoacylation of both mitochondrial tRNA(Glu) and tRNA(Gln) and participates in RNA aminoacylation for mitochondrial protein translation. Attachs glutamate to tRNA(Glu) or tRNA(Gln) in a two-step reaction: glutamate is first activated by ATP to form Glu-AMP and then transferred to the acceptor end of tRNA(Glu) or tRNA(Gln). The chain is Nondiscriminating glutamyl-tRNA synthetase EARS2, mitochondrial from Danio rerio (Zebrafish).